The following is a 349-amino-acid chain: Hypoxia-inducible factor 1-alpha inhibitor (349 aa).

Residues 1-14 (MAATAAEVAASGSG) are compositionally biased toward low complexity. The segment at 1 to 51 (MAATAAEVAASGSGEAREEAEAPGPAWDESQLRSYSFPTRPIPRLSQSDPR) is disordered. At Ala2 the chain carries N-acetylalanine. Positions 2–125 (AATAAEVAAS…PRSNREEIKF (124 aa)) are interaction with VHL. In terms of domain architecture, JmjC spans 142 to 307 (ERLYLQQTLN…KGAPTPKRIE (166 aa)). Residue Tyr145 participates in 2-oxoglutarate binding. Substrate contacts are provided by residues Asp152 and 181–183 (QLT). Thr196 contributes to the 2-oxoglutarate binding site. Fe cation-binding residues include His199 and Asp201. 201-203 (DEQ) is a substrate binding site. Residues Asn205 and Lys214 each coordinate 2-oxoglutarate. A substrate-binding site is contributed by 238–239 (RQ). His279 is a Fe cation binding site. Asn294 contributes to the 2-oxoglutarate binding site. Residues Ala300 and Asn321 each contribute to the substrate site.

Homodimer; homodimerization is essential for catalytic activity. Interacts with VHL and HIF1A. Part of a complex with VHL, HIF1A and HDAC1 or HDAC2 or HDAC3. Interacts with NFKB1 and NFKBIA. Interacts with NOTCH1, NOTCH2 and NOTCH3 but not with NOTCH4. Interacts with ABPA3. Interacts with TNKS2. Interacts with PPP1R12A. Interacts with UBE3A. Interacts with ASB4. Interacts with ANKS3. Interacts with NECAB3; the interaction is indirect and seems to be mediated by APBA3. Fe(2+) serves as cofactor.

Its subcellular location is the nucleus. It localises to the cytoplasm. It is found in the perinuclear region. It carries out the reaction L-asparaginyl-[hypoxia-inducible factor alpha subunit] + 2-oxoglutarate + O2 = (3S)-3-hydroxy-L-asparaginyl-[hypoxia-inducible factor alpha subunit] + succinate + CO2. It catalyses the reaction L-histidyl-[ankyrin-repeat domain protein] + 2-oxoglutarate + O2 = (3S)-3-hydroxy-L-histidyl-[ankyrin-repeat domain protein] + succinate + CO2. The enzyme catalyses L-asparaginyl-[ankyrin-repeat domain protein] + 2-oxoglutarate + O2 = (3S)-3-hydroxy-L-asparaginyl-[ankyrin-repeat domain protein] + succinate + CO2. The catalysed reaction is L-aspartyl-[ankyrin-repeat domain protein] + 2-oxoglutarate + O2 = (3S)-3-hydroxy-L-aspartyl-[ankyrin-repeat domain protein] + succinate + CO2. In terms of biological role, hydroxylates HIF-1 alpha at 'Asn-799' in the C-terminal transactivation domain (CAD). Functions as an oxygen sensor and, under normoxic conditions, the hydroxylation prevents interaction of HIF-1 with transcriptional coactivators including Cbp/p300-interacting transactivator. Involved in transcriptional repression through interaction with HIF1A, VHL and histone deacetylases. Hydroxylates specific Asn residues within ankyrin repeat domains (ARD) of NFKB1, NFKBIA, NOTCH1, ASB4, PPP1R12A and several other ARD-containing proteins. Also hydroxylates Asp and His residues within ARDs of ANK1 and TNKS2, respectively. Negatively regulates NOTCH1 activity, accelerating myogenic differentiation. Positively regulates ASB4 activity, promoting vascular differentiation. In Mus musculus (Mouse), this protein is Hypoxia-inducible factor 1-alpha inhibitor (Hif1an).